Here is a 325-residue protein sequence, read N- to C-terminus: uncharacterized protein (325 aa).

Residues 1–75 (MSQPPEHPGN…PPPGYPTHLQ (75 aa)) are disordered. Positions 24–70 (YPPPGYGAPPPPPGYGPPPGTYLPPGYNAPPPPPGYGPPPGPPPPGY) are enriched in pro residues. 4 helical membrane passes run 96 to 116 (AVTL…VIGA), 153 to 173 (IVMF…HAGI), 205 to 225 (LLIV…GLIF), and 273 to 293 (LVGE…AALI).

This sequence to M.tuberculosis Rv2560.

The protein resides in the cell membrane. This is an uncharacterized protein from Mycobacterium bovis (strain ATCC BAA-935 / AF2122/97).